A 157-amino-acid chain; its full sequence is Transcription elongation factor GreA (157 aa).

Positions 47 to 75 (ENAEYDAAREKQGQIEDRITELENILSNA) form a coiled coil.

It belongs to the GreA/GreB family.

Functionally, necessary for efficient RNA polymerase transcription elongation past template-encoded arresting sites. The arresting sites in DNA have the property of trapping a certain fraction of elongating RNA polymerases that pass through, resulting in locked ternary complexes. Cleavage of the nascent transcript by cleavage factors such as GreA or GreB allows the resumption of elongation from the new 3'terminus. GreA releases sequences of 2 to 3 nucleotides. The polypeptide is Transcription elongation factor GreA (Mycoplasmopsis pulmonis (strain UAB CTIP) (Mycoplasma pulmonis)).